The sequence spans 279 residues: Large ribosomal subunit protein uL2 (279 aa).

Positions 223–279 (TVRGSAMNPNDHPHGGGEGRSPVGMDAPRTPWGKRHMGVKTRNNKKSSTSMIVRRRK) are disordered. Residues 254–267 (WGKRHMGVKTRNNK) show a composition bias toward basic residues.

It belongs to the universal ribosomal protein uL2 family. As to quaternary structure, part of the 50S ribosomal subunit. Forms a bridge to the 30S subunit in the 70S ribosome.

Its function is as follows. One of the primary rRNA binding proteins. Required for association of the 30S and 50S subunits to form the 70S ribosome, for tRNA binding and peptide bond formation. It has been suggested to have peptidyltransferase activity; this is somewhat controversial. Makes several contacts with the 16S rRNA in the 70S ribosome. This chain is Large ribosomal subunit protein uL2, found in Ureaplasma urealyticum serovar 10 (strain ATCC 33699 / Western).